Consider the following 314-residue polypeptide: Aspartate carbamoyltransferase catalytic subunit (314 aa).

Residues Arg-55 and Thr-56 each coordinate carbamoyl phosphate. Lys-83 serves as a coordination point for L-aspartate. Carbamoyl phosphate contacts are provided by Arg-105, His-139, and Gln-142. Positions 172 and 226 each coordinate L-aspartate. The carbamoyl phosphate site is built by Gly-267 and Pro-268.

Belongs to the aspartate/ornithine carbamoyltransferase superfamily. ATCase family. Heterododecamer (2C3:3R2) of six catalytic PyrB chains organized as two trimers (C3), and six regulatory PyrI chains organized as three dimers (R2).

It catalyses the reaction carbamoyl phosphate + L-aspartate = N-carbamoyl-L-aspartate + phosphate + H(+). It functions in the pathway pyrimidine metabolism; UMP biosynthesis via de novo pathway; (S)-dihydroorotate from bicarbonate: step 2/3. Catalyzes the condensation of carbamoyl phosphate and aspartate to form carbamoyl aspartate and inorganic phosphate, the committed step in the de novo pyrimidine nucleotide biosynthesis pathway. The chain is Aspartate carbamoyltransferase catalytic subunit from Rhodococcus jostii (strain RHA1).